The following is a 191-amino-acid chain: Protein Ves (191 aa).

This sequence belongs to the Ves family.

This Citrobacter koseri (strain ATCC BAA-895 / CDC 4225-83 / SGSC4696) protein is Protein Ves.